The sequence spans 957 residues: Glycine dehydrogenase (decarboxylating) (957 aa).

Lysine 708 carries the N6-(pyridoxal phosphate)lysine modification.

It belongs to the GcvP family. As to quaternary structure, the glycine cleavage system is composed of four proteins: P, T, L and H. It depends on pyridoxal 5'-phosphate as a cofactor.

The enzyme catalyses N(6)-[(R)-lipoyl]-L-lysyl-[glycine-cleavage complex H protein] + glycine + H(+) = N(6)-[(R)-S(8)-aminomethyldihydrolipoyl]-L-lysyl-[glycine-cleavage complex H protein] + CO2. The glycine cleavage system catalyzes the degradation of glycine. The P protein binds the alpha-amino group of glycine through its pyridoxal phosphate cofactor; CO(2) is released and the remaining methylamine moiety is then transferred to the lipoamide cofactor of the H protein. In Klebsiella pneumoniae (strain 342), this protein is Glycine dehydrogenase (decarboxylating).